Reading from the N-terminus, the 2682-residue chain is 3-methylorcinaldehyde synthase (2682 aa).

The segment at 111–272 (LIPLVVIEQL…TEITLYGAFH (162 aa)) is N-terminal acylcarrier protein transacylase domain (SAT). The active-site Nucleophile; for transacylase activity is the Cys-154. His-272 (proton donor/acceptor; for transacylase activity) is an active-site residue. The 426-residue stretch at 401–826 (ESDIAVIGMA…GSNASMIVMQ (426 aa)) folds into the Ketosynthase family 3 (KS3) domain. Catalysis depends on for beta-ketoacyl synthase activity residues Cys-573, His-708, and His-749. Residues 947 to 1237 (FGGQVSTHIG…ITAMTSRALD (291 aa)) are malonyl-CoA:ACP transacylase (MAT) domain. The N-terminal hotdog fold stretch occupies residues 1339 to 1468 (LTFVGFQDSS…GKIKFTNARD (130 aa)). The region spanning 1339-1651 (LTFVGFQDSS…YVKIPKLSMQ (313 aa)) is the PKS/mFAS DH domain. A product template (PT) domain region spans residues 1367–1649 (LLLGHMTIQT…IAYVKIPKLS (283 aa)). Catalysis depends on His-1371, which acts as the Proton acceptor; for dehydratase activity. The interval 1496–1651 (VDEVLANRSI…YVKIPKLSMQ (156 aa)) is C-terminal hotdog fold. The Proton donor; for dehydratase activity role is filled by Asp-1555. Positions 1723-1797 (ENITERVKAV…DLMKVVTGVV (75 aa)) constitute a Carrier domain. O-(pantetheine 4'-phosphoryl)serine is present on Ser-1757. Positions 2021–2211 (EWPLNQVMYT…AGYGHVYWTE (191 aa)) are methyltransferase domain. The interval 2303-2548 (VTGATGGLGA…LGWTPADAIA (246 aa)) is NADPH-binding (R) domain.

The protein operates within secondary metabolite biosynthesis; terpenoid biosynthesis. Its function is as follows. Non-reducing polyketide synthase; part of the gene cluster that mediates the biosynthesis of eupenifeldin, a bistropolone meroterpenoid that acts as an antitumor agent. The first step of eupenifeldin biosynthesis is the biosynthesis of 3-methylorcinaldehyde performed by the non-reducing polyketide synthase eupA. Oxidative dearomatization of 3-methylorcinaldehyde likely catalyzed by the FAD-dependent monooxygenase eupB is followed by oxidative ring expansion by the 2-oxoglutarate-dependent dioxygenase eupC to provide the first tropolone metabolite, tropolone stipitaldehyde. In parallel, generation of sesquiterpene alpha-humulene from farnesylpyrophosphate (FPP) is catalyzed by the terpene cyclase eupE. The cytochrome P450 monooxygenase eupD then hydroxylates humulene to humulenol. The putative Diels-Alderase eupF probably catalyzes the formation of the tropolone-humulene skeleton by linking humulenol and the polyketide moiety. The short-chain dehydrogenase/reductase eupG and the flavin-dependent monooxygenase eupH are also essential for eupenifeldin biosynthesis and are likely the additional decorating enzymes of the tropolone-humulene skeleton to produce final eupenifeldin or derivatives. In Phoma sp, this protein is 3-methylorcinaldehyde synthase.